The sequence spans 790 residues: Protein SEY1 (790 aa).

At Met1–Gln692 the chain is on the cytoplasmic side. Residues Gly55–Tyr284 form the GB1/RHD3-type G domain. A GTP-binding site is contributed by Gly65–Ser72. Residues Ile693–Ile713 form a helical membrane-spanning segment. The Lumenal portion of the chain corresponds to Arg714–Pro716. A helical membrane pass occupies residues Leu717–Leu737. At Leu738–Met790 the chain is on the cytoplasmic side.

It belongs to the TRAFAC class dynamin-like GTPase superfamily. GB1/RHD3 GTPase family. RHD3 subfamily.

Its subcellular location is the endoplasmic reticulum membrane. Functionally, cooperates with the reticulon proteins and tubule-shaping DP1 family proteins to generate and maintain the structure of the tubular endoplasmic reticulum network. Has GTPase activity, which is required for its function in ER organization. Required for virulence and resistance to cycloheximide. In Candida albicans (strain SC5314 / ATCC MYA-2876) (Yeast), this protein is Protein SEY1.